We begin with the raw amino-acid sequence, 240 residues long: Protein FATTY ACID EXPORT 2, chloroplastic (240 aa).

Residues 1–84 constitute a chloroplast transit peptide; it reads MADLILSSSS…TANCVDSGVK (84 aa). Over residues 97–113 the composition is skewed to gly residues; sequence GGGIGGDKFGGGGGGGD. Residues 97–134 form a disordered region; that stretch reads GGGIGGDKFGGGGGGGDGNDDGGEDDKEESDGKKSTPL. Acidic residues predominate over residues 114–125; it reads GNDDGGEDDKEE. Transmembrane regions (helical) follow at residues 164–184, 186–206, and 214–234; these read SLLA…QLPT, PVLA…VMGT, and IFPA…YIHG.

The protein belongs to the TMEM14 family.

The protein resides in the plastid. The protein localises to the chloroplast membrane. Functionally, may be involved in free fatty acids export from the plastids. This Arabidopsis thaliana (Mouse-ear cress) protein is Protein FATTY ACID EXPORT 2, chloroplastic.